The following is a 430-amino-acid chain: Probable glucose-6-phosphate isomerase (430 aa).

Residue Glu-271 is the Proton donor of the active site. Active-site residues include His-292, His-303, and Lys-403.

This sequence belongs to the GPI family.

It localises to the cytoplasm. The catalysed reaction is alpha-D-glucose 6-phosphate = beta-D-fructose 6-phosphate. The protein operates within carbohydrate biosynthesis; gluconeogenesis. Its pathway is carbohydrate degradation; glycolysis; D-glyceraldehyde 3-phosphate and glycerone phosphate from D-glucose: step 2/4. In terms of biological role, catalyzes the reversible isomerization of glucose-6-phosphate to fructose-6-phosphate. The sequence is that of Probable glucose-6-phosphate isomerase from Haloquadratum walsbyi (strain DSM 16790 / HBSQ001).